A 515-amino-acid chain; its full sequence is Zinc-binding protein AdcA (515 aa).

The first 28 residues, 1–28 (MKKKILLMMSLISVFFAWQLTQAKQVLA), serve as a signal peptide directing secretion. Residue H66 coordinates Zn(2+). The interval 126–148 (HHHEEADKKHEHNKHSEEGHNHA) is disordered. Residues 129 to 148 (EEADKKHEHNKHSEEGHNHA) are his-rich loop. H152, H216, and E291 together coordinate Zn(2+).

The protein belongs to the bacterial solute-binding protein 9 family.

Functionally, part of the ATP-binding cassette (ABC) transport system AdcABC involved in zinc import. Binds zinc with high affinity and specificity and delivers it to the membrane permease for translocation into the cytoplasm. The polypeptide is Zinc-binding protein AdcA (adcA) (Streptococcus pyogenes serotype M3 (strain ATCC BAA-595 / MGAS315)).